The following is a 195-amino-acid chain: Putative C-P lyase subunit protein HtxG (195 aa).

This sequence belongs to the PhnH family.

In terms of biological role, belongs to an operon involved in hypophosphite oxidation. Exact function not known. This chain is Putative C-P lyase subunit protein HtxG (htxG), found in Stutzerimonas stutzeri (Pseudomonas stutzeri).